The chain runs to 170 residues: Cathelicidin antimicrobial peptide (170 aa).

Residues 1-30 (MKTQRDGPSLGRWSLVLLLLGLTMPLAVIA) form the signal peptide. A propeptide spans 31 to 131 (RVLSYQEAVL…DISCDKDKRK (101 aa)) (cathelin-like domain (CLD)). 2 disulfide bridges follow: C86–C97 and C108–C125. An active core region spans residues 150-162 (LKNIGQRIKDFFG).

Belongs to the cathelicidin family. As to quaternary structure, monomer, homodimer or homotrimer (in vitro). Oligomerizes as tetra- or hexamer in solution (in vitro). Proteolytically cleaved by proteinase PRTN3 into antibacterial peptide LL-37. Proteolytically cleaved by cathepsin CTSG and neutrophil elastase ELANE. In terms of processing, resistant to proteolytic degradation in solution, and when bound to both zwitterionic (mimicking mammalian membranes) and negatively charged membranes (mimicking bacterial membranes). Post-translationally, after secretion onto the skin surface, the CAMP gene product is processed by a serine protease-dependent mechanism into multiple novel antimicrobial peptides distinct from and shorter than cathelicidin LL-37. These peptides show enhanced antimicrobial action, acquiring the ability to kill skin pathogens such as S.aureus, E.coli and C.albicans. These peptides have lost the ability to stimulate CXCL8/IL8 release from keratinocytes. The peptides act synergistically, killing bacteria at lower concentrations when present together, and maintain activity at increased salt condition.

It localises to the secreted. It is found in the vesicle. In terms of biological role, antimicrobial protein that is an integral component of the innate immune system. Binds to bacterial lipopolysaccharides (LPS). Acts via neutrophil N-formyl peptide receptors to enhance the release of CXCL2. Postsecretory processing generates multiple cathelicidin antimicrobial peptides with various lengths which act as a topical antimicrobial defense in sweat on skin. The unprocessed precursor form, cathelicidin antimicrobial peptide, inhibits the growth of Gram-negative E.coli and E.aerogenes with efficiencies comparable to that of the mature peptide LL-37 (in vitro). Antimicrobial peptide that is an integral component of the innate immune system. Binds to bacterial lipopolysaccharides (LPS). Causes membrane permeabilization by forming transmembrane pores (in vitro). Causes lysis of E.coli. Exhibits antimicrobial activity against Gram-negative bacteria such as P.aeruginosa, S.typhimurium, E.aerogenes, E.coli and P.syringae, Gram-positive bacteria such as L.monocytogenes, S.epidermidis, S.pyogenes and S.aureus, as well as vancomycin-resistant enterococci (in vitro). Exhibits antimicrobial activity against methicillin-resistant S.aureus, P.mirabilis, and C.albicans in low-salt media, but not in media containing 100 mM NaCl (in vitro). Forms chiral supramolecular assemblies with quinolone signal (PQS) molecules of P.aeruginosa, which may lead to interference of bacterial quorum signaling and perturbance of bacterial biofilm formation. May form supramolecular fiber-like assemblies on bacterial membranes. Induces cytokine and chemokine producation as well as TNF/TNFA and CSF2/GMCSF production in normal human keratinocytes. Exhibits hemolytic activity against red blood cells. Functionally, exhibits antimicrobial activity against E.coli and B.megaterium (in vitro). This is Cathelicidin antimicrobial peptide from Ateles fusciceps robustus (Colombian black-faced spider monkey).